A 266-amino-acid polypeptide reads, in one-letter code: Killer cell lectin-like receptor 5 (266 aa).

The Cytoplasmic portion of the chain corresponds to Met-1–Gln-44. A helical; Signal-anchor for type II membrane protein membrane pass occupies residues Leu-45–Val-66. The Extracellular portion of the chain corresponds to Lys-67–Gly-266. N-linked (GlcNAc...) asparagine glycans are attached at residues Asn-87 and Asn-104. In terms of domain architecture, C-type lectin spans Gly-143–Leu-261. 4 disulfide bridges follow: Cys-149–Cys-154, Cys-167–Cys-255, Cys-171–Cys-257, and Cys-236–Cys-249. Asn-250 carries an N-linked (GlcNAc...) asparagine glycan.

As to quaternary structure, homodimer; disulfide-linked. In terms of tissue distribution, mostly expressed in NK cells, but also observed on NK T and memory T-cells.

The protein resides in the membrane. Receptor on natural killer (NK) cells for class I MHC. This is Killer cell lectin-like receptor 5 (Klra5) from Mus musculus (Mouse).